Reading from the N-terminus, the 88-residue chain is Arminin 1a (88 aa).

An N-terminal signal peptide occupies residues 1–18 (MKTVLAFLFLPFIAFTHA). A propeptide spanning residues 19–57 (ESYEDVKEEIKNEAEKEIFEDLEEESDALDSSVREFNDA) is cleaved from the precursor. Val85 carries the post-translational modification Valine amide.

It belongs to the arminin family. Expressed in entodermal epithelium along the body column.

Its subcellular location is the secreted. The protein localises to the target cell membrane. Functionally, antimicrobial peptide with a broad-spectrum antimicrobial activity. Shows very strong bactericidal activity against B.megaterium (MBC=0.1 uM), E.coli (MBC=0.2 uM), S.aureus (MBC=0.4 uM), methicillin-resistant S.aureus (MRSA) (MBC=0.4-0.8 uM), vancomycin-resistant enterococci (VRE) (E.faecalis (MBC=1.6 uM), and E.faecium (MBC=0.4-0.8 uM)), and extended-spectrum beta-lactamase (ESBL)-producing enterobacteriaceae strains (K.pneumoniae (MBC=0.4-0.8 uM), E.coli (MBC=0.2-0.4 uM)). Keeps its antibacterial activity under a wide range of salt concentrations that mimic physiological conditions of human blood, which is surprising, since Hydra is an obligate freshwater animal with nearly no salt tolerance. Does not affect red blood cells. The protein is Arminin 1a of Hydra vulgaris (Hydra).